A 712-amino-acid polypeptide reads, in one-letter code: BTB/POZ domain-containing protein 18 (712 aa).

The BTB domain occupies cysteine 34–glutamine 102. Disordered stretches follow at residues valine 157–leucine 176, arginine 212–valine 355, and glutamate 374–serine 410. Polar residues predominate over residues glutamine 218–serine 228. Positions glutamine 229–threonine 238 are enriched in basic and acidic residues. Over residues serine 277–serine 288 the composition is skewed to low complexity. Positions valine 303–lysine 313 are enriched in basic and acidic residues. Residues proline 396–serine 410 show a composition bias toward polar residues. 3 positions are modified to phosphoserine: serine 420, serine 671, and serine 672. Disordered regions lie at residues lysine 653–glutamate 676 and threonine 691–threonine 712. Residues serine 702 to threonine 712 are compositionally biased toward acidic residues.

Its subcellular location is the nucleus. Specifically required during spermatogenesis to promote expression of piRNA precursors. The piRNA metabolic process mediates the repression of transposable elements during meiosis by forming complexes composed of piRNAs and Piwi proteins and governs the methylation and subsequent repression of transposons, which is essential for the germline integrity. Acts by facilitating transcription elongation at piRNA loci during pachytene. This chain is BTB/POZ domain-containing protein 18, found in Homo sapiens (Human).